The following is an 82-amino-acid chain: Teratocyte protein CftICK-IV (82 aa).

An N-terminal signal peptide occupies residues 1–21 (MAKILLTFIILTCLIVTITPA).

In terms of processing, contains 4 disulfide bonds. In terms of tissue distribution, abundantly expressed by teratocytes, which are extra-embryonic cells released by parasitoid wasps into their hosts during larval eclosion.

The protein resides in the secreted. In terms of biological role, this endoparasitoid wasp peptide has immununosuppressive and insecticidal activities. Suppress cellular immunity which is detectable as a reduction of hemocyte spread index in the host. In vivo, ingestion of this peptide moderately reduces leaf consumption of D.saccharalis, a permissive host for the lepidoptere C.flavipes. The protein is Teratocyte protein CftICK-IV of Cotesia flavipes (Parasitic wasp).